A 92-amino-acid chain; its full sequence is SPbeta prophage-derived DNA-binding protein HU 2 (92 aa).

A Phosphothreonine modification is found at T4. The interval 55–77 (RAARKGRNPQTGEEIDIPATKAP) is disordered.

The protein belongs to the bacterial histone-like protein family. Homodimer.

Functionally, histone-like DNA-binding protein which is capable of wrapping DNA to stabilize it, and thus to prevent its denaturation under extreme environmental conditions. This Bacillus subtilis (strain 168) protein is SPbeta prophage-derived DNA-binding protein HU 2 (hup2).